The following is a 248-amino-acid chain: tRNA (guanine-N(1)-)-methyltransferase (248 aa).

S-adenosyl-L-methionine contacts are provided by residues G113 and 133–138 (IGDYVL). The segment at 227–248 (RPAQTIRAKGESQKTPKNKTDG) is disordered. A compositionally biased stretch (basic and acidic residues) spans 234 to 248 (AKGESQKTPKNKTDG).

The protein belongs to the RNA methyltransferase TrmD family. As to quaternary structure, homodimer.

The protein localises to the cytoplasm. The enzyme catalyses guanosine(37) in tRNA + S-adenosyl-L-methionine = N(1)-methylguanosine(37) in tRNA + S-adenosyl-L-homocysteine + H(+). Specifically methylates guanosine-37 in various tRNAs. The sequence is that of tRNA (guanine-N(1)-)-methyltransferase from Rhodopseudomonas palustris (strain TIE-1).